We begin with the raw amino-acid sequence, 458 residues long: UDP-N-acetylmuramoylalanine--D-glutamate ligase (458 aa).

Glycine 124–threonine 130 is an ATP binding site.

It belongs to the MurCDEF family.

Its subcellular location is the cytoplasm. It carries out the reaction UDP-N-acetyl-alpha-D-muramoyl-L-alanine + D-glutamate + ATP = UDP-N-acetyl-alpha-D-muramoyl-L-alanyl-D-glutamate + ADP + phosphate + H(+). The protein operates within cell wall biogenesis; peptidoglycan biosynthesis. Cell wall formation. Catalyzes the addition of glutamate to the nucleotide precursor UDP-N-acetylmuramoyl-L-alanine (UMA). The chain is UDP-N-acetylmuramoylalanine--D-glutamate ligase from Clostridium botulinum (strain 657 / Type Ba4).